Consider the following 122-residue polypeptide: Large ribosomal subunit protein uL14 (122 aa).

Belongs to the universal ribosomal protein uL14 family. Part of the 50S ribosomal subunit. Forms a cluster with proteins L3 and L19. In the 70S ribosome, L14 and L19 interact and together make contacts with the 16S rRNA in bridges B5 and B8.

Functionally, binds to 23S rRNA. Forms part of two intersubunit bridges in the 70S ribosome. This is Large ribosomal subunit protein uL14 from Desulforapulum autotrophicum (strain ATCC 43914 / DSM 3382 / VKM B-1955 / HRM2) (Desulfobacterium autotrophicum).